We begin with the raw amino-acid sequence, 158 residues long: Transcription elongation factor GreA (158 aa).

This sequence belongs to the GreA/GreB family.

Its function is as follows. Necessary for efficient RNA polymerase transcription elongation past template-encoded arresting sites. The arresting sites in DNA have the property of trapping a certain fraction of elongating RNA polymerases that pass through, resulting in locked ternary complexes. Cleavage of the nascent transcript by cleavage factors such as GreA or GreB allows the resumption of elongation from the new 3'terminus. GreA releases sequences of 2 to 3 nucleotides. The chain is Transcription elongation factor GreA from Macrococcus caseolyticus (strain JCSC5402) (Macrococcoides caseolyticum).